The following is a 290-amino-acid chain: MSQHDPVSAAWRAHRAYLVDLAFRMVGDIGVAEDMVQEAFSRLLRAPVGDIDDERGWLIVVTSRLCLDHIKSASTRRERPQDIAAWHDGDASVSSVDPADRVTLDDEVRLALLIMLERLGPAERVVFVLHEIFGLPYQQIATTIGSQASTCRQLAHRARRKINESRIAASVEPAQHRVVTRAFIEACSNGDLDTLLEVLDPGVAGEIDARKGVVVVGADRVGPTILRHWSHPATVLVAQPVCGQPAVLAFVNRALAGVLALSIEAGKITKIHVLVQPSTLDPLRAELGGG.

Positions 11–74 (WRAHRAYLVD…LCLDHIKSAS (64 aa)) are sigma-70 factor domain-2. A Polymerase core binding motif is present at residues 34–37 (DMVQ). The tract at residues 110-162 (LALLIMLERLGPAERVVFVLHEIFGLPYQQIATTIGSQASTCRQLAHRARRKI) is sigma-70 factor domain-4_2. Positions 137–156 (YQQIATTIGSQASTCRQLAH) form a DNA-binding region, H-T-H motif.

This sequence belongs to the sigma-70 factor family. ECF subfamily. As to quaternary structure, interacts transiently with the RNA polymerase catalytic core formed by RpoA, RpoB, RpoC and RpoZ (2 alpha, 1 beta, 1 beta' and 1 omega subunit) to form the RNA polymerase holoenzyme that can initiate transcription.

Its function is as follows. Sigma factors are initiation factors that promote the attachment of RNA polymerase to specific initiation sites and are then released. Extracytoplasmic function (ECF) sigma factors are held in an inactive form by a cognate anti-sigma factor until released, although no anti-sigma factor is known for this protein. The sequence is that of Probable ECF RNA polymerase sigma factor SigI (sigI) from Mycobacterium tuberculosis (strain CDC 1551 / Oshkosh).